The sequence spans 638 residues: Threonine--tRNA ligase (638 aa).

The 63-residue stretch at 1 to 63 (MVMIQIELPD…TESGRLEIIT (63 aa)) folds into the TGS domain. The segment at 245 to 536 (DHRRIGRELD…LIEHYAGNFP (292 aa)) is catalytic. Zn(2+) is bound by residues cysteine 337, histidine 388, and histidine 513.

It belongs to the class-II aminoacyl-tRNA synthetase family. In terms of assembly, homodimer. The cofactor is Zn(2+).

It is found in the cytoplasm. It carries out the reaction tRNA(Thr) + L-threonine + ATP = L-threonyl-tRNA(Thr) + AMP + diphosphate + H(+). Catalyzes the attachment of threonine to tRNA(Thr) in a two-step reaction: L-threonine is first activated by ATP to form Thr-AMP and then transferred to the acceptor end of tRNA(Thr). Also edits incorrectly charged L-seryl-tRNA(Thr). The chain is Threonine--tRNA ligase from Syntrophotalea carbinolica (strain DSM 2380 / NBRC 103641 / GraBd1) (Pelobacter carbinolicus).